Reading from the N-terminus, the 310-residue chain is MSDVNAVKHFLLSLQKDICQQLAAIDGGADFAEDEWQRAEGGGGCSRVLSGGRVFERAGVNFSHVTGKSLPPSASTHRPDLAGRSFQAMGVSLVIHPLSPYIPTSHANVRLFIAEKPGEEPVWWFGGGFDLTPYYGFKEDAVHWHQTAHDLCQPFGDEVYPRYKKWCDDYFFLKHRNEARGIGGLFFDDLNEPDFATSFAFIRAVGNGFLDGYLPIVERRKDLPWGEREREFQLYRRGRYVEFNLIWDRGTLFGLQSGGRTESILMSMPPLARWEYQHQPEPGSPEALLYQDFLPARDWLAESHTHNKEA.

Ser-92 is a binding site for substrate. His-96 and His-106 together coordinate a divalent metal cation. Residue His-106 is the Proton donor of the active site. 108–110 (NVR) contacts substrate. 2 residues coordinate a divalent metal cation: His-145 and His-175. The tract at residues 240-275 (YVEFNLIWDRGTLFGLQSGGRTESILMSMPPLARWE) is important for dimerization. 258–260 (GGR) lines the substrate pocket.

Belongs to the aerobic coproporphyrinogen-III oxidase family. As to quaternary structure, homodimer. The cofactor is a divalent metal cation.

It is found in the cytoplasm. The enzyme catalyses coproporphyrinogen III + O2 + 2 H(+) = protoporphyrinogen IX + 2 CO2 + 2 H2O. The protein operates within porphyrin-containing compound metabolism; protoporphyrin-IX biosynthesis; protoporphyrinogen-IX from coproporphyrinogen-III (O2 route): step 1/1. Functionally, involved in the heme biosynthesis. Catalyzes the aerobic oxidative decarboxylation of propionate groups of rings A and B of coproporphyrinogen-III to yield the vinyl groups in protoporphyrinogen-IX. This chain is Oxygen-dependent coproporphyrinogen-III oxidase, found in Pectobacterium carotovorum subsp. carotovorum (strain PC1).